Consider the following 554-residue polypeptide: Serine/threonine-protein phosphatase 2B catalytic subunit (554 aa).

Fe cation is bound by residues Asp119, His121, and Asp147. The Zn(2+) site is built by Asp147 and Asn179. His180 acts as the Proton donor in catalysis. Positions 228 and 310 each coordinate Zn(2+). Positions 411–433 (LKESAPTQHKQPAPSENENKADQ) are disordered. Residues 415–426 (APTQHKQPAPSE) show a composition bias toward polar residues.

This sequence belongs to the PPP phosphatase family. PP-2B subfamily. As to quaternary structure, composed of two components (A and B), the A component is the catalytic subunit and the B component confers calcium sensitivity. Requires Fe(3+) as cofactor. Zn(2+) serves as cofactor.

The enzyme catalyses O-phospho-L-seryl-[protein] + H2O = L-seryl-[protein] + phosphate. The catalysed reaction is O-phospho-L-threonyl-[protein] + H2O = L-threonyl-[protein] + phosphate. Its function is as follows. Calcium-dependent, calmodulin-stimulated protein phosphatase. This subunit may have a role in the calmodulin activation of calcineurin. Appears to be involved in cytokinesis, mating, transport, nuclear and spindle pole body positioning, and cell shape. The chain is Serine/threonine-protein phosphatase 2B catalytic subunit (ppb1) from Schizosaccharomyces pombe (strain 972 / ATCC 24843) (Fission yeast).